The primary structure comprises 253 residues: Ras-like protein family member 11A-like (253 aa).

Residues 43-50 (GASNVGKT), 90-97 (DTPCVSLQ), and 157-160 (NKSD) contribute to the GTP site. The disordered stretch occupies residues 213–233 (GNGEKRKGGLHLARPKSPNMQ).

The protein belongs to the small GTPase superfamily. Ras family.

Its subcellular location is the nucleus. It is found in the nucleolus. It catalyses the reaction GTP + H2O = GDP + phosphate + H(+). Regulator of rDNA transcription. The polypeptide is Ras-like protein family member 11A-like (Danio rerio (Zebrafish)).